Here is a 497-residue protein sequence, read N- to C-terminus: Cobyric acid synthase (497 aa).

The GATase cobBQ-type domain occupies 257–431 (WLRVAAVRLP…WHGLLDNDDF (175 aa)). Cysteine 338 functions as the Nucleophile in the catalytic mechanism. Histidine 423 is an active-site residue.

It belongs to the CobB/CobQ family. CobQ subfamily.

Its pathway is cofactor biosynthesis; adenosylcobalamin biosynthesis. Catalyzes amidations at positions B, D, E, and G on adenosylcobyrinic A,C-diamide. NH(2) groups are provided by glutamine, and one molecule of ATP is hydrogenolyzed for each amidation. This Mycolicibacterium paratuberculosis (strain ATCC BAA-968 / K-10) (Mycobacterium paratuberculosis) protein is Cobyric acid synthase.